An 862-amino-acid chain; its full sequence is Alpha,alpha-trehalose-phosphate synthase [UDP-forming] 5 (862 aa).

Phosphoserine is present on S5. T32 bears the Phosphothreonine mark. Residues 60–546 (DRIIIVGNQL…ARSFIQDLER (487 aa)) form a glycosyltransferase region.

In the N-terminal section; belongs to the glycosyltransferase 20 family. The protein in the C-terminal section; belongs to the trehalose phosphatase family. In terms of assembly, binds to the phosphopeptide-binding site of GRF/14-3-3 and to MBF1c. In terms of processing, both Ser-5 and Thr-32 must be phosphorylated for binding to GRF/14-3-3. Low expression in leaves, stems, flower buds, flowers and siliques.

The catalysed reaction is D-glucose 6-phosphate + UDP-alpha-D-glucose = alpha,alpha-trehalose 6-phosphate + UDP + H(+). This chain is Alpha,alpha-trehalose-phosphate synthase [UDP-forming] 5 (TPS5), found in Arabidopsis thaliana (Mouse-ear cress).